Here is a 434-residue protein sequence, read N- to C-terminus: ATP-dependent protease ATPase subunit HslU (434 aa).

Residues V18, 60-65, D247, E312, and R384 each bind ATP; that span reads GVGKTE.

This sequence belongs to the ClpX chaperone family. HslU subfamily. In terms of assembly, a double ring-shaped homohexamer of HslV is capped on each side by a ring-shaped HslU homohexamer. The assembly of the HslU/HslV complex is dependent on binding of ATP.

It localises to the cytoplasm. In terms of biological role, ATPase subunit of a proteasome-like degradation complex; this subunit has chaperone activity. The binding of ATP and its subsequent hydrolysis by HslU are essential for unfolding of protein substrates subsequently hydrolyzed by HslV. HslU recognizes the N-terminal part of its protein substrates and unfolds these before they are guided to HslV for hydrolysis. The protein is ATP-dependent protease ATPase subunit HslU of Rhodopseudomonas palustris (strain BisB18).